A 409-amino-acid polypeptide reads, in one-letter code: uncharacterized protein (409 aa).

The first 29 residues, 1–29, serve as a signal peptide directing secretion; the sequence is MARSRCVHRVVHQAACIGVIGLSTSALTT. A lipid anchor (N-palmitoyl cysteine) is attached at cysteine 30. The S-diacylglycerol cysteine moiety is linked to residue cysteine 30.

Belongs to the TP013X lipoprotein family.

The protein localises to the cell membrane. This is an uncharacterized protein from Treponema pallidum (strain Nichols).